The following is a 352-amino-acid chain: Putative conjugal transfer protein MT3759 (352 aa).

Residue Gly160–Thr167 coordinates ATP.

The protein belongs to the GSP E family.

Its subcellular location is the cytoplasm. This is Putative conjugal transfer protein MT3759 from Mycobacterium tuberculosis (strain CDC 1551 / Oshkosh).